The chain runs to 84 residues: Chymotrypsin inhibitor Ani s 6 (84 aa).

Residues 1–22 (MFQSTFFLVLMVCVATARFANK) form the signal peptide. Intrachain disulfides connect cysteine 25/cysteine 58, cysteine 34/cysteine 54, cysteine 38/cysteine 50, cysteine 42/cysteine 79, and cysteine 60/cysteine 73. A TIL domain is found at 25-79 (CPPNEEYNECGNPCQEKCDNGEPVICTYQCEHRCFCKQGYVRLTEDGECVPEEFC).

It belongs to the serine protease inhibitor-like (TIL domain-containing) family.

The protein resides in the secreted. Its function is as follows. Inhibits alpha-chymotrypsin, but not trypsin. The polypeptide is Chymotrypsin inhibitor Ani s 6 (Anisakis simplex (Herring worm)).